A 192-amino-acid polypeptide reads, in one-letter code: Chromophore lyase CpcS/CpeS 2 (192 aa).

Belongs to the CpcS/CpeS biliprotein lyase family.

Its function is as follows. Covalently attaches a chromophore to Cys residue(s) of phycobiliproteins. The protein is Chromophore lyase CpcS/CpeS 2 of Synechocystis sp. (strain ATCC 27184 / PCC 6803 / Kazusa).